The following is a 2273-amino-acid chain: Acetyl-CoA carboxylase, mitochondrial (2273 aa).

A mitochondrion-targeting transit peptide spans 1–104 (KGKTITHGQS…RGNIHKHTRL (104 aa)). One can recognise a Biotin carboxylation domain in the interval 134–635 (VISKILIANN…STGWLDDLIL (502 aa)). The ATP-grasp domain maps to 292 to 484 (KTNFVSVPDD…LPATQLQIAM (193 aa)). An ATP-binding site is contributed by 332–337 (GGGGKG). Arg-459 is a catalytic residue. One can recognise a Biotinyl-binding domain in the interval 763–837 (LEAELNPTQV…EAGDVIAKLT (75 aa)). Lys-804 carries the N6-biotinyllysine modification. Residues 1532–1867 (PYSVKDWLQP…KRDMSPPLLE (336 aa)) form the CoA carboxyltransferase N-terminal domain. The interval 1532-2187 (PYSVKDWLQP…EGQVIKRLQK (656 aa)) is carboxyltransferase. CoA contacts are provided by Arg-1776, Lys-2080, and Arg-2082. Residues 1871-2187 (RWDRDVDFKP…EGQVIKRLQK (317 aa)) form the CoA carboxyltransferase C-terminal domain.

Biotin serves as cofactor.

The protein resides in the mitochondrion. The catalysed reaction is hydrogencarbonate + acetyl-CoA + ATP = malonyl-CoA + ADP + phosphate + H(+). It catalyses the reaction N(6)-biotinyl-L-lysyl-[protein] + hydrogencarbonate + ATP = N(6)-carboxybiotinyl-L-lysyl-[protein] + ADP + phosphate + H(+). The protein operates within lipid metabolism; malonyl-CoA biosynthesis; malonyl-CoA from acetyl-CoA: step 1/1. Functionally, catalyzes the rate-limiting reaction in the mitochondrial fatty acid synthesis (FAS) type II pathway. Responsible for the production of the mitochondrial malonyl-CoA, used for the biosynthesis of the cofactor lipoic acid. This protein carries three functions: biotin carboxyl carrier protein, biotin carboxylase, and carboxyltransferase. This is Acetyl-CoA carboxylase, mitochondrial (HFA1) from Saccharomyces cerevisiae (strain JAY291) (Baker's yeast).